Here is a 235-residue protein sequence, read N- to C-terminus: Myc target protein 1 (235 aa).

The Bipartite nuclear localization signal motif lies at 95-113; the sequence is RRRRASAPISQWSSSRRSR. S135, S138, S141, and S149 each carry phosphoserine.

It belongs to the MYCT1 family. In terms of tissue distribution, down-regulated in gastric cancer tissues.

Its subcellular location is the nucleus. In terms of biological role, may regulate certain MYC target genes, MYC seems to be a direct upstream transcriptional activator. Does not seem to significantly affect growth cell capacity. Overexpression seems to mediate many of the known phenotypic features associated with MYC, including promotion of apoptosis, alteration of morphology, enhancement of anchorage-independent growth, tumorigenic conversion, promotion of genomic instability, and inhibition of hematopoietic differentiation. The sequence is that of Myc target protein 1 (MYCT1) from Homo sapiens (Human).